Reading from the N-terminus, the 581-residue chain is Arginine--tRNA ligase (581 aa).

A 'HIGH' region motif is present at residues 126–136 (PNLAKEMHVGH).

Belongs to the class-I aminoacyl-tRNA synthetase family. In terms of assembly, monomer.

It is found in the cytoplasm. It catalyses the reaction tRNA(Arg) + L-arginine + ATP = L-arginyl-tRNA(Arg) + AMP + diphosphate. The polypeptide is Arginine--tRNA ligase (Shewanella woodyi (strain ATCC 51908 / MS32)).